A 205-amino-acid chain; its full sequence is Thymidylate kinase (205 aa).

10–17 (GLEGAGKS) lines the ATP pocket.

The protein belongs to the thymidylate kinase family.

The catalysed reaction is dTMP + ATP = dTDP + ADP. Functionally, phosphorylation of dTMP to form dTDP in both de novo and salvage pathways of dTTP synthesis. The sequence is that of Thymidylate kinase from Idiomarina loihiensis (strain ATCC BAA-735 / DSM 15497 / L2-TR).